Reading from the N-terminus, the 681-residue chain is Cryptochrome-1 (681 aa).

Residues 1 to 489 (MSGSVSGCGS…AKARLHEALS (489 aa)) form a CNT1, binds chromophores to sense blue light and mediate CRY dimerization region. In terms of domain architecture, Photolyase/cryptochrome alpha/beta spans 12–141 (GCSIVWFRRD…AVRSFNADLL (130 aa)). Cysteine 80 and cysteine 190 are oxidised to a cystine. Tyrosine 235 contacts FAD. A Mg(2+)-binding site is contributed by asparagine 238. Arginine 239 serves as a coordination point for ATP. Lysine 241, serine 244, and threonine 246 together coordinate Mg(2+). FAD is bound by residues 247–251 (TSFLS) and serine 293. Histidine 358 contacts Mg(2+). Residues aspartate 359 and 390 to 392 (DAD) contribute to the FAD site. 359–360 (DR) provides a ligand contact to ATP. Aspartate 409 is a binding site for ATP. A CCT1/CCE1, mediates blue light signaling region spans residues 490–681 (QMWQLEAASR…LNWRRLSQTG (192 aa)). Disordered regions lie at residues 525–598 (RDIT…EPAS) and 616–664 (STED…TSSY). The span at 583 to 598 (MVNTNQAQQRRAEPAS) shows a compositional bias: polar residues. Residue serine 616 is modified to Phosphoserine. Phosphothreonine is present on threonine 621.

This sequence belongs to the DNA photolyase class-1 family. Homodimer. Interacts with ADO1, COP1 and PHYA. Interacts specifically with the dark/far-red (Pr) state of PHYB, but not with the red light-activated (Pfr). Interacts with PIF4 and PIF5 in the nucleus in response to low blue light (LBL). Binds to SPA1 and SPA4 in response to blue light, this interaction prevents SPA1/COP1 complex formation and thus avoid COP1-dependent degradation of the transcription factor HY5 by the proteasome and promotes hypocotyl elongation. Interacts with TCP2. Binding to ATP mediates conformational changes which facilitate flavin binding. FAD is required as a cofactor. (6R)-5,10-methylene-5,6,7,8-tetrahydrofolate serves as cofactor. In terms of processing, autophosphorylated; in response to blue light and when in complex with FAD cofactor. Kinase activity is optimal in the presence of magnesium ions, about 30 percent of the optimal activity in the presence of manganese ions, but inactive with calcium ions. Adopts an open conformation when phosphorylated upon photoexcitation and thus interacts with signaling partner proteins. In terms of tissue distribution, widely expressed. Expressed in the aerial tissues (e.g. cotyledons and leaf primordia), but not detected in the roots.

The protein localises to the cytoplasm. The protein resides in the nucleus. Its subcellular location is the PML body. Its activity is regulated as follows. Light exposure induces a conformational change in the C-terminal domain CCT1 required for activity. In terms of biological role, photoreceptor that mediates primarily blue light inhibition of hypocotyl elongation and photoperiodic control of floral initiation, and regulates other light responses, including circadian rhythms, tropic growth, stomata opening, guard cell development, root development, bacterial and viral pathogen responses, abiotic stress responses, cell cycles, programmed cell death, apical dominance, fruit and ovule development, seed dormancy, and magnetoreception. Photoexcited cryptochromes interact with signaling partner proteins to alter gene expression at both transcriptional and post-translational levels and, consequently, regulate the corresponding metabolic and developmental programs. Blue-light absorbing flavoprotein that activates reversible flavin photoreduction via an electron transport chain comprising a tryptophan triad (W-324, W-377 and W-400), accompanied by a large conformational change upon photoexcitation, or via an alternative electron transport that involves small metabolites, including NADPH, NADH, and ATP. The half-life of the activated signaling state is about 5 minutes. Also involved in the detection of blue/green ratio in light (shade under leaf canopies) and subsequent adaptations on plant growth and development. In darkness, the dark reoxidation of flavin occurs and leads to inactivated state. Perceives low blue light (LBL) and responds by directly contacting two bHLH transcription factors, PIF4 and PIF5, at chromatin on E-box variant 5'-CA[CT]GTG-3' to promote their activity and stimulate specific gene expression to adapt global physiology (e.g. hypocotyl elongation and hyponastic growth in low blue light). When activated by high-intensity blue light, catalyzes direct enzymatic conversion of molecular oxygen O(2) to reactive oxygen species (ROS) and hydrogen peroxide H(2)O(2) in vitro. ROS accumulation upon activation by blue light leads to cell death in protoplasts. Seems essential for blue-light-triggered and singlet oxygen-mediated programmed cell death (PCD). Required for the induction of nuclear genes encoding photoprotective components by GATA24 and GATA28 in extreme light intensities that exceed the electron utilization capacity of the chloroplast. Involved in shortening the circadian clock period, especially at 27 degrees Celsius, in blue light (BL) and required to maintain clock genes expression rhythm. Mediates blue light-induced gene expression and hypocotyl elongation through the inhibition of COP1-mediated degradation of the transcription factors BIT1 and HY5 and via the activation of anion channels at the plasma membrane, probably via auxin signaling. Required for the hypocotyl hook formation in darkness. Involved in blue light-dependent stomatal opening, CHS gene expression, transpiration, inhibition of stem growth and increase of root growth, probably by regulating abscisic acid (ABA). Prevents lateral roots growth by inhibiting auxin transport. Necessary for shade avoidance syndrome (SAS), characterized by leaf hyponasty and reduced lamina/petiole ratio, when exposed to blue light attenuation. Together with phototropins, involved in phototropism regulation by various blue light fluence; blue light attenuates phototropism in high fluence rates (100 umol.m-2.s-1) but enhances phototropism in low fluence rates (&lt;1.0 umol.m-2.s-1). Required for blue/UV-A wavelengths-mediated inhibition of explants shoot regeneration in vitro (e.g. new shoot apical meristems regeneration from excised cotyledons). Modulates anthocyanin accumulation in a PHYA-dependent manner in far-red-light. Acts as a PHYA/PHYB-dependent modulator of chlorophyll accumulation in red light. Contributes to most blue light deetiolation responses. May act as a chemical magnetoreceptor, via magnetically sensitive kinetics and quantum yields of photo-induced flavin / tryptophan radical pairs. The effect of near-null magnetic field on flowering is altered by changes of blue light cycle and intensity in a CRY1/CRY2-dependent manner. Involved in the strigolactone signaling that regulates hypocotyl growth in response to blue light. Modulates temperature-dependent growth and physiology maintenance, especially at warm ambient temperatures (e.g. 27 degrees Celsius) and in white light and low-light conditions, via HFR1-dependent activity; this process requires PTAC12/HMR/PAP5 (transcriptional transactivator). Implicated in promoting R protein-mediated resistance to Pseudomonas syringae pv. tomato (Pst.) DC3000 under continuous light conditions. Promotes systemic acquired resistance (SAR) and PR gene expression triggered by P.syringae. This chain is Cryptochrome-1, found in Arabidopsis thaliana (Mouse-ear cress).